The sequence spans 66 residues: Beta-toxin Css6 (66 aa).

Residues 1–66 form the LCN-type CS-alpha/beta domain; that stretch reads KEGYLVNSYT…VWPLPNKTCN (66 aa). 4 disulfide bridges follow: cysteine 12–cysteine 65, cysteine 16–cysteine 41, cysteine 25–cysteine 46, and cysteine 29–cysteine 48. Residue asparagine 66 is modified to Asparagine amide.

It belongs to the long (4 C-C) scorpion toxin superfamily. Sodium channel inhibitor family. Beta subfamily. As to expression, expressed by the venom gland.

It is found in the secreted. Functionally, beta toxins bind voltage-independently at site-4 of sodium channels (Nav) and shift the voltage of activation toward more negative potentials thereby affecting sodium channel activation and promoting spontaneous and repetitive firing. The chain is Beta-toxin Css6 from Centruroides suffusus (Durango bark scorpion).